The following is a 162-amino-acid chain: Small ribosomal subunit protein uS13 (162 aa).

The interval 142-162 (RGQRTKSTGRRGSTVGVSRKK) is disordered.

This sequence belongs to the universal ribosomal protein uS13 family. Part of the 30S ribosomal subunit. Forms a loose heterodimer with protein S19. Forms two bridges to the 50S subunit in the 70S ribosome.

Its function is as follows. Located at the top of the head of the 30S subunit, it contacts several helices of the 16S rRNA. In the 70S ribosome it contacts the 23S rRNA (bridge B1a) and protein L5 of the 50S subunit (bridge B1b), connecting the 2 subunits; these bridges are implicated in subunit movement. The polypeptide is Small ribosomal subunit protein uS13 (Methanosarcina mazei (strain ATCC BAA-159 / DSM 3647 / Goe1 / Go1 / JCM 11833 / OCM 88) (Methanosarcina frisia)).